Here is a 329-residue protein sequence, read N- to C-terminus: Tagatose 1,6-diphosphate aldolase 2 (329 aa).

This sequence belongs to the aldolase LacD family.

It catalyses the reaction D-tagatofuranose 1,6-bisphosphate = D-glyceraldehyde 3-phosphate + dihydroxyacetone phosphate. Its pathway is carbohydrate metabolism; D-tagatose 6-phosphate degradation; D-glyceraldehyde 3-phosphate and glycerone phosphate from D-tagatose 6-phosphate: step 2/2. The polypeptide is Tagatose 1,6-diphosphate aldolase 2 (lacD2) (Streptococcus mutans serotype c (strain ATCC 700610 / UA159)).